The sequence spans 338 residues: Ribosomal RNA small subunit methyltransferase C (338 aa).

Belongs to the methyltransferase superfamily. RsmC family. Monomer.

Its subcellular location is the cytoplasm. It catalyses the reaction guanosine(1207) in 16S rRNA + S-adenosyl-L-methionine = N(2)-methylguanosine(1207) in 16S rRNA + S-adenosyl-L-homocysteine + H(+). Functionally, specifically methylates the guanine in position 1207 of 16S rRNA in the 30S particle. The protein is Ribosomal RNA small subunit methyltransferase C of Buchnera aphidicola subsp. Acyrthosiphon pisum (strain APS) (Acyrthosiphon pisum symbiotic bacterium).